The following is a 278-amino-acid chain: Tryptophan synthase alpha chain (278 aa).

Catalysis depends on proton acceptor residues Glu50 and Asp61.

This sequence belongs to the TrpA family. As to quaternary structure, tetramer of two alpha and two beta chains.

It carries out the reaction (1S,2R)-1-C-(indol-3-yl)glycerol 3-phosphate + L-serine = D-glyceraldehyde 3-phosphate + L-tryptophan + H2O. It participates in amino-acid biosynthesis; L-tryptophan biosynthesis; L-tryptophan from chorismate: step 5/5. Functionally, the alpha subunit is responsible for the aldol cleavage of indoleglycerol phosphate to indole and glyceraldehyde 3-phosphate. The polypeptide is Tryptophan synthase alpha chain (Afipia carboxidovorans (strain ATCC 49405 / DSM 1227 / KCTC 32145 / OM5) (Oligotropha carboxidovorans)).